A 123-amino-acid chain; its full sequence is Keratin-associated protein 2-2 (123 aa).

Residues 5–112 (CCGSTFSSLS…SVQSPCGQPT (108 aa)) are 11 X 5 AA repeats of C-C-[CDPQRWG]-[APRS]-[CIPSTVD].

The protein belongs to the KRTAP type 2 family. Interacts with hair keratins.

In terms of biological role, in the hair cortex, hair keratin intermediate filaments are embedded in an interfilamentous matrix, consisting of hair keratin-associated proteins (KRTAP), which are essential for the formation of a rigid and resistant hair shaft through their extensive disulfide bond cross-linking with abundant cysteine residues of hair keratins. The matrix proteins include the high-sulfur and high-glycine-tyrosine keratins. This Homo sapiens (Human) protein is Keratin-associated protein 2-2 (KRTAP2-2).